The primary structure comprises 1472 residues: Adhesion G protein-coupled receptor L1 (1472 aa).

A signal peptide spans 1–24 (MARLAAVLWSLCVTAILVTSATQG). At 25-857 (LSRAGLPFGL…EIYQGRINEL (833 aa)) the chain is on the extracellular side. Residues 40-129 (ACEGYPIELR…KYLEVQYDCV (90 aa)) form the SUEL-type lectin domain. 5 cysteine pairs are disulfide-bonded: Cys-41–Cys-71, Cys-50–Cys-128, Cys-83–Cys-115, Cys-96–Cys-102, and Cys-140–Cys-322. Glu-42 is a binding site for alpha-L-rhamnose. Residue Asn-98 is glycosylated (N-linked (GlcNAc...) asparagine). Position 117–120 (117–120 (GTYK)) interacts with alpha-L-rhamnose. The Olfactomedin-like domain maps to 139–398 (VCPGTLQKVL…VVRYSLEFGP (260 aa)). A disordered region spans residues 400–468 (DPSAGPATSP…APAPSTRRPP (69 aa)). Positions 405–441 (PATSPPLSTTTTARPTPLTSTASPAATTPLRRAPLTT) are enriched in low complexity. A compositionally biased stretch (pro residues) spans 453 to 468 (DLPPATAPAPSTRRPP). 2 cysteine pairs are disulfide-bonded: Cys-480-Cys-515 and Cys-503-Cys-532. N-linked (GlcNAc...) asparagine glycosylation is found at Asn-531, Asn-640, Asn-741, Asn-800, Asn-805, and Asn-826. Residues 669–850 (PARFLAAKQN…AVLMAHREIY (182 aa)) enclose the GAIN-B domain. Cystine bridges form between Cys-801-Cys-832 and Cys-820-Cys-834. The segment at 801–850 (CSFWNYSERSMLGYWSTQGCRLVESNKTHTTCACSHLTNFAVLMAHREIY) is GPS. A helical membrane pass occupies residues 858 to 878 (LLSVITWVGIVISLVCLAICI). At 879 to 892 (STFCFLRGLQTDRN) the chain is on the cytoplasmic side. The chain crosses the membrane as a helical span at residues 893–913 (TIHKNLCINLFLAELLFLVGI). At 914 to 919 (DKTQYE) the chain is on the extracellular side. The helical transmembrane segment at 920 to 940 (IACPIFAGLLHYFFLAAFSWL) threads the bilayer. Residues 941–963 (CLEGVHLYLLLVEVFESEYSRTK) lie on the Cytoplasmic side of the membrane. A helical membrane pass occupies residues 964–984 (YYYLGGYCFPALVVGIAAAID). Residues 985-1001 (YRSYGTEKACWLRVDNY) are Extracellular-facing. The chain crosses the membrane as a helical span at residues 1002–1022 (FIWSFIGPVSFVIVVNLVFLM). At 1023-1049 (VTLHKMVRSSSVLKPDSSRLDNIKSWA) the chain is on the cytoplasmic side. The helical transmembrane segment at 1050 to 1070 (LGAIALLFLLGLTWAFGLLFI) threads the bilayer. Residues 1071–1074 (NKES) are Extracellular-facing. The chain crosses the membrane as a helical span at residues 1075 to 1095 (VVMAYLFTTFNAFQGVFIFVF). Residues 1096-1472 (HCALQKKVHK…DGQMQLVTSL (377 aa)) lie on the Cytoplasmic side of the membrane. Arg-1193 carries the omega-N-methylarginine modification. Ser-1219 carries the phosphoserine modification. Disordered regions lie at residues 1247-1271 (FNNS…PRGR), 1291-1325 (NLRG…GGPG), 1358-1427 (ESES…SRPP), and 1449-1472 (YLAA…VTSL). Composition is skewed to pro residues over residues 1301–1313 (GPPP…PPVP) and 1406–1418 (ALPP…PGPP). Ser-1471 carries the post-translational modification Phosphoserine.

Belongs to the G-protein coupled receptor 2 family. Adhesion G-protein coupled receptor (ADGR) subfamily. In terms of assembly, forms a heterodimer, consisting of a large extracellular region (p120) non-covalently linked to a seven-transmembrane moiety (p85). Interacts with syntaxin and with proteins of the SHANK family via the PDZ domain. Interacts (via extracellular domain) with FLRT1, FLRT2 and FLRT3 (via extracellular domain). In terms of processing, autoproteolytically cleaved into 2 subunits, an extracellular subunit and a seven-transmembrane subunit. This proteolytic processing takes place early in the biosynthetic pathway, either in the endoplasmic reticulum or in the early compartment of the Golgi apparatus. As to expression, brain-specific expression but low levels are also detected in kidney, lung and spleen.

Its subcellular location is the cell membrane. It localises to the cell projection. The protein localises to the axon. It is found in the growth cone. The protein resides in the synapse. Its subcellular location is the presynaptic cell membrane. It localises to the synaptosome. In terms of biological role, calcium-independent receptor of high affinity for alpha-latrotoxin, an excitatory neurotoxin present in black widow spider venom which triggers massive exocytosis from neurons and neuroendocrine cells. Receptor for TENM2 that mediates heterophilic synaptic cell-cell contact and postsynaptic specialization. Receptor probably implicated in the regulation of exocytosis. In Bos taurus (Bovine), this protein is Adhesion G protein-coupled receptor L1.